A 616-amino-acid polypeptide reads, in one-letter code: Chaperone protein HscA (616 aa).

It belongs to the heat shock protein 70 family.

Functionally, chaperone involved in the maturation of iron-sulfur cluster-containing proteins. Has a low intrinsic ATPase activity which is markedly stimulated by HscB. Involved in the maturation of IscU. The polypeptide is Chaperone protein HscA (Escherichia coli O139:H28 (strain E24377A / ETEC)).